Here is a 461-residue protein sequence, read N- to C-terminus: V-type ATP synthase beta chain (461 aa).

The protein belongs to the ATPase alpha/beta chains family.

Produces ATP from ADP in the presence of a proton gradient across the membrane. The V-type beta chain is a regulatory subunit. The protein is V-type ATP synthase beta chain of Streptococcus pneumoniae (strain CGSP14).